The primary structure comprises 42 residues: Potassium channel toxin gamma-KTx 1.4 (42 aa).

4 disulfide bridges follow: C5/C23, C11/C34, C20/C39, and C24/C41.

It belongs to the ergtoxin family. Gamma-KTx 1 subfamily. Expressed by the venom gland.

It localises to the secreted. Functionally, blocks Kv11/ERG potassium channels. The protein is Potassium channel toxin gamma-KTx 1.4 of Centruroides sculpturatus (Arizona bark scorpion).